Consider the following 751-residue polypeptide: Photosystem I P700 chlorophyll a apoprotein A1 (751 aa).

The next 8 membrane-spanning stretches (helical) occupy residues 73–96 (VFSA…FHGA), 159–182 (LYST…WHYH), 198–222 (MNHH…HIAL), 294–312 (MAHH…GHQY), 349–372 (WHAQ…HHMY), 388–414 (LSLF…IFMV), 436–458 (AIIS…LYIH), and 533–551 (FMVH…LILL). Residues C575 and C584 each coordinate [4Fe-4S] cluster. 2 helical membrane passes run 591–612 (HVFL…HFSW) and 665–687 (LSAY…MFLF). H676 serves as a coordination point for chlorophyll a'. Chlorophyll a is bound by residues M684 and Y692. Residue W693 coordinates phylloquinone. Residues 725 to 745 (AVGVAHYLLGGIATTWSFFLA) form a helical membrane-spanning segment.

The protein belongs to the PsaA/PsaB family. As to quaternary structure, the PsaA/B heterodimer binds the P700 chlorophyll special pair and subsequent electron acceptors. PSI consists of a core antenna complex that captures photons, and an electron transfer chain that converts photonic excitation into a charge separation. The eukaryotic PSI reaction center is composed of at least 11 subunits. P700 is a chlorophyll a/chlorophyll a' dimer, A0 is one or more chlorophyll a, A1 is one or both phylloquinones and FX is a shared 4Fe-4S iron-sulfur center. serves as cofactor.

Its subcellular location is the plastid. It is found in the chloroplast thylakoid membrane. It catalyses the reaction reduced [plastocyanin] + hnu + oxidized [2Fe-2S]-[ferredoxin] = oxidized [plastocyanin] + reduced [2Fe-2S]-[ferredoxin]. Its function is as follows. PsaA and PsaB bind P700, the primary electron donor of photosystem I (PSI), as well as the electron acceptors A0, A1 and FX. PSI is a plastocyanin/cytochrome c6-ferredoxin oxidoreductase, converting photonic excitation into a charge separation, which transfers an electron from the donor P700 chlorophyll pair to the spectroscopically characterized acceptors A0, A1, FX, FA and FB in turn. Oxidized P700 is reduced on the lumenal side of the thylakoid membrane by plastocyanin or cytochrome c6. In Ostreococcus tauri, this protein is Photosystem I P700 chlorophyll a apoprotein A1.